The primary structure comprises 382 residues: V-type proton ATPase subunit C 1 (382 aa).

N-acetylthreonine is present on threonine 2.

The protein belongs to the V-ATPase C subunit family. V-ATPase is a heteromultimeric enzyme made up of two complexes: the ATP-hydrolytic V1 complex and the proton translocation V0 complex. The V1 complex consists of three catalytic AB heterodimers that form a heterohexamer, three peripheral stalks each consisting of EG heterodimers, one central rotor including subunits D and F, and the regulatory subunits C and H. The proton translocation complex V0 consists of the proton transport subunit a, a ring of proteolipid subunits c9c'', rotary subunit d, subunits e and f, and the accessory subunits ATP6AP1/Ac45 and ATP6AP2/PRR. Expressed in brain (at protein level).

Its subcellular location is the cytoplasmic vesicle. The protein resides in the secretory vesicle. It localises to the synaptic vesicle membrane. The protein localises to the clathrin-coated vesicle membrane. Subunit of the V1 complex of vacuolar(H+)-ATPase (V-ATPase), a multisubunit enzyme composed of a peripheral complex (V1) that hydrolyzes ATP and a membrane integral complex (V0) that translocates protons. V-ATPase is responsible for acidifying and maintaining the pH of intracellular compartments and in some cell types, is targeted to the plasma membrane, where it is responsible for acidifying the extracellular environment. Subunit C is necessary for the assembly of the catalytic sector of the enzyme and is likely to have a specific function in its catalytic activity. In Bos taurus (Bovine), this protein is V-type proton ATPase subunit C 1 (ATP6V1C1).